The chain runs to 312 residues: Protein ABIL2 (312 aa).

The segment at 173-287 (TIRETPPPPV…TEQQQPSKSK (115 aa)) is disordered. Positions 183 to 199 (RKSTSQSSSPRQPPQRS) are enriched in low complexity. Over residues 230–251 (SVATRKSASISRPTTPSKSRSI) the composition is skewed to polar residues. A compositionally biased stretch (basic and acidic residues) spans 269–279 (AFEKDNQKETE).

This sequence belongs to the ABI family. Binds SCAR.

It is found in the cytoplasm. The protein resides in the cytoskeleton. Its function is as follows. Involved in regulation of actin and microtubule organization. Part of a WAVE complex that activates the Arp2/3 complex. In Arabidopsis thaliana (Mouse-ear cress), this protein is Protein ABIL2 (ABIL2).